The sequence spans 118 residues: Holo-[acyl-carrier-protein] synthase (118 aa).

Aspartate 8 and glutamate 58 together coordinate Mg(2+).

This sequence belongs to the P-Pant transferase superfamily. AcpS family. The cofactor is Mg(2+).

The protein localises to the cytoplasm. The catalysed reaction is apo-[ACP] + CoA = holo-[ACP] + adenosine 3',5'-bisphosphate + H(+). Functionally, transfers the 4'-phosphopantetheine moiety from coenzyme A to a Ser of acyl-carrier-protein. This is Holo-[acyl-carrier-protein] synthase from Streptococcus equi subsp. zooepidemicus (strain H70).